The chain runs to 255 residues: MDMMDGCQFSPSEYFYDGSCIPSPDGEFGDEFEPRVAAFGAHKADLQGSDEDEHVRAPTGHHQAGHCLMWACKACKRKSTTMDRRKAATMRERRRLKKVNQAFDTLKRCTTTNPNQRLPKVEILRNAIRYIESLQELLREQVENYYSLPGQSCSEPTSPTSSCSDGMPECNSPIWSRKSSSFDSVYCPDVPNVYATDKSSLSSLDCLSSIVDRITNSEQPGLPLQDPASLSPVASTDSQPATPGASSSRLIYHVL.

Residues 83 to 134 enclose the bHLH domain; that stretch reads DRRKAATMRERRRLKKVNQAFDTLKRCTTTNPNQRLPKVEILRNAIRYIESL. Positions 217-249 are disordered; sequence SEQPGLPLQDPASLSPVASTDSQPATPGASSSR. Over residues 232–249 the composition is skewed to polar residues; sequence PVASTDSQPATPGASSSR.

As to quaternary structure, efficient DNA binding requires dimerization with another bHLH protein.

It localises to the nucleus. Functionally, acts as a transcriptional activator that promotes transcription of muscle-specific target genes and plays a role in muscle differentiation. Together with MYOG and MYOD1, co-occupies muscle-specific gene promoter core region during myogenesis. Induces fibroblasts to differentiate into myoblasts. Probable sequence specific DNA-binding protein. This Bos taurus (Bovine) protein is Myogenic factor 5 (MYF5).